The following is a 438-amino-acid chain: Ribosomal protein uS12 methylthiotransferase RimO (438 aa).

The MTTase N-terminal domain maps to 5–115 (PRVGFVSLGC…VMSAVHTHLP (111 aa)). 6 residues coordinate [4Fe-4S] cluster: Cys14, Cys50, Cys79, Cys146, Cys150, and Cys153. The Radical SAM core domain maps to 132–369 (LTPKHYAYLK…MAVQAEISAR (238 aa)). The TRAM domain occupies 372-438 (ERRVGQTLQV…SEHDLWGERR (67 aa)).

It belongs to the methylthiotransferase family. RimO subfamily. [4Fe-4S] cluster is required as a cofactor.

It localises to the cytoplasm. The enzyme catalyses L-aspartate(89)-[ribosomal protein uS12]-hydrogen + (sulfur carrier)-SH + AH2 + 2 S-adenosyl-L-methionine = 3-methylsulfanyl-L-aspartate(89)-[ribosomal protein uS12]-hydrogen + (sulfur carrier)-H + 5'-deoxyadenosine + L-methionine + A + S-adenosyl-L-homocysteine + 2 H(+). Functionally, catalyzes the methylthiolation of an aspartic acid residue of ribosomal protein uS12. The sequence is that of Ribosomal protein uS12 methylthiotransferase RimO from Chromobacterium violaceum (strain ATCC 12472 / DSM 30191 / JCM 1249 / CCUG 213 / NBRC 12614 / NCIMB 9131 / NCTC 9757 / MK).